The chain runs to 357 residues: tRNA N6-adenosine threonylcarbamoyltransferase (357 aa).

Fe cation contacts are provided by histidine 115 and histidine 119. Substrate contacts are provided by residues 137-141, aspartate 170, glycine 183, and asparagine 281; that span reads LASGG. Aspartate 309 is a binding site for Fe cation.

This sequence belongs to the KAE1 / TsaD family. It depends on Fe(2+) as a cofactor.

Its subcellular location is the cytoplasm. It catalyses the reaction L-threonylcarbamoyladenylate + adenosine(37) in tRNA = N(6)-L-threonylcarbamoyladenosine(37) in tRNA + AMP + H(+). Its function is as follows. Required for the formation of a threonylcarbamoyl group on adenosine at position 37 (t(6)A37) in tRNAs that read codons beginning with adenine. Is involved in the transfer of the threonylcarbamoyl moiety of threonylcarbamoyl-AMP (TC-AMP) to the N6 group of A37, together with TsaE and TsaB. TsaD likely plays a direct catalytic role in this reaction. The sequence is that of tRNA N6-adenosine threonylcarbamoyltransferase from Nitrobacter winogradskyi (strain ATCC 25391 / DSM 10237 / CIP 104748 / NCIMB 11846 / Nb-255).